Here is a 331-residue protein sequence, read N- to C-terminus: Ketol-acid reductoisomerase (NADP(+)) (331 aa).

In terms of domain architecture, KARI N-terminal Rossmann spans 2–182 (ARMYYDADAQ…GGTRAGILET (181 aa)). NADP(+)-binding positions include 25 to 28 (YGSQ), serine 51, serine 53, and 83 to 86 (DEVQ). Histidine 108 is a catalytic residue. Position 134 (glycine 134) interacts with NADP(+). A KARI C-terminal knotted domain is found at 183–328 (TFREETETDL…QELRSMFSWL (146 aa)). Residues aspartate 191, glutamate 195, glutamate 227, and glutamate 231 each contribute to the Mg(2+) site. Serine 252 provides a ligand contact to substrate.

Belongs to the ketol-acid reductoisomerase family. Requires Mg(2+) as cofactor.

The enzyme catalyses (2R)-2,3-dihydroxy-3-methylbutanoate + NADP(+) = (2S)-2-acetolactate + NADPH + H(+). The catalysed reaction is (2R,3R)-2,3-dihydroxy-3-methylpentanoate + NADP(+) = (S)-2-ethyl-2-hydroxy-3-oxobutanoate + NADPH + H(+). It functions in the pathway amino-acid biosynthesis; L-isoleucine biosynthesis; L-isoleucine from 2-oxobutanoate: step 2/4. Its pathway is amino-acid biosynthesis; L-valine biosynthesis; L-valine from pyruvate: step 2/4. Its function is as follows. Involved in the biosynthesis of branched-chain amino acids (BCAA). Catalyzes an alkyl-migration followed by a ketol-acid reduction of (S)-2-acetolactate (S2AL) to yield (R)-2,3-dihydroxy-isovalerate. In the isomerase reaction, S2AL is rearranged via a Mg-dependent methyl migration to produce 3-hydroxy-3-methyl-2-ketobutyrate (HMKB). In the reductase reaction, this 2-ketoacid undergoes a metal-dependent reduction by NADPH to yield (R)-2,3-dihydroxy-isovalerate. This chain is Ketol-acid reductoisomerase (NADP(+)), found in Thermosynechococcus vestitus (strain NIES-2133 / IAM M-273 / BP-1).